We begin with the raw amino-acid sequence, 372 residues long: Methylthioribose-1-phosphate isomerase (372 aa).

Asp-252 functions as the Proton donor in the catalytic mechanism.

This sequence belongs to the eIF-2B alpha/beta/delta subunits family. MtnA subfamily.

The protein localises to the cytoplasm. It is found in the nucleus. It carries out the reaction 5-(methylsulfanyl)-alpha-D-ribose 1-phosphate = 5-(methylsulfanyl)-D-ribulose 1-phosphate. Its pathway is amino-acid biosynthesis; L-methionine biosynthesis via salvage pathway; L-methionine from S-methyl-5-thio-alpha-D-ribose 1-phosphate: step 1/6. Catalyzes the interconversion of methylthioribose-1-phosphate (MTR-1-P) into methylthioribulose-1-phosphate (MTRu-1-P). The protein is Methylthioribose-1-phosphate isomerase of Yarrowia lipolytica (strain CLIB 122 / E 150) (Yeast).